The following is a 235-amino-acid chain: Peptidyl-tRNA hydrolase (235 aa).

Y14 provides a ligand contact to tRNA. The active-site Proton acceptor is the H19. Residues F64, N66, and N112 each contribute to the tRNA site. The segment at R186–R235 is disordered. A compositionally biased stretch (basic and acidic residues) spans K198–R207.

This sequence belongs to the PTH family. In terms of assembly, monomer.

It is found in the cytoplasm. The catalysed reaction is an N-acyl-L-alpha-aminoacyl-tRNA + H2O = an N-acyl-L-amino acid + a tRNA + H(+). Functionally, hydrolyzes ribosome-free peptidyl-tRNAs (with 1 or more amino acids incorporated), which drop off the ribosome during protein synthesis, or as a result of ribosome stalling. In terms of biological role, catalyzes the release of premature peptidyl moieties from peptidyl-tRNA molecules trapped in stalled 50S ribosomal subunits, and thus maintains levels of free tRNAs and 50S ribosomes. In Dinoroseobacter shibae (strain DSM 16493 / NCIMB 14021 / DFL 12), this protein is Peptidyl-tRNA hydrolase.